We begin with the raw amino-acid sequence, 460 residues long: MALPGSLNRYLLLMAQEHLEFRLPEIKSLLSVIGGQFTNSQETYGKSPFWILNIPSEDIARNLMKRTVCAKSIFELWGHGKSPEELYTSLKSYPVEKMVPYLHSDSTYKIKIHTFNKTLTQEEKVKRIDALEFLPFQGKVNLKKPQHVFSILEDYGLDPNSIPKDPHNIYFGRWIADGQRELIESYSVKKRHFIGNTSMDAGLSFIMTNHAKVKENDLVFDPFVGTGGLLIASAHFGAYVCGTDIDYNTVHGLGKASRKNQKWRGPDENIRANLRQYGLEKFYLDVLVSDASKPSWRKGTYFDAIITDPPYGIRESTRRSGSQKDIPKGIEKCPESHVPVSLSYHLSDMFFDLLNFAAETLVLGGRLVYWLPVYTPEYTEEMVPWHPCLRLISNCEQKLSSHTARRLITMEKVKEFENRDKYSHLLSDHFLPYQGHNSFREKYFSGVTKRIAKEEKCSHE.

Position 2 is an N-acetylalanine (Ala2).

It belongs to the class I-like SAM-binding methyltransferase superfamily. TRM11 methyltransferase family. In terms of assembly, part of the heterodimeric TRMT11-TRM112 methyltransferase complex; this complex forms an active tRNA methyltransferase, where TRMT112 acts as an activator of the catalytic subunit TRMT11.

It is found in the cytoplasm. The enzyme catalyses guanosine(10) in tRNA + S-adenosyl-L-methionine = N(2)-methylguanosine(10) in tRNA + S-adenosyl-L-homocysteine + H(+). In terms of biological role, catalytic subunit of the TRMT11-TRM112 methyltransferase complex, that specifically mediates the S-adenosyl-L-methionine-dependent N(2)-methylation of guanosine nucleotide at position 10 (m2G10) in tRNAs. This is one of the major tRNA (guanine-N(2))-methyltransferases. The sequence is that of tRNA (guanine(10)-N(2))-methyltransferase TRMT11 from Mus musculus (Mouse).